The chain runs to 160 residues: Probable dihydroneopterin aldolase 3 (160 aa).

Residues Glu59, Phe91, and 110 to 111 (YE) each bind substrate. Lys137 acts as the Proton donor/acceptor in catalysis.

The protein belongs to the DHNA family. In terms of assembly, homooctamer. Forms a hollow cylinder assembled from two ring-shaped tetramers. In terms of tissue distribution, expressed at very low levels in siliques.

It catalyses the reaction 7,8-dihydroneopterin = 6-hydroxymethyl-7,8-dihydropterin + glycolaldehyde. It functions in the pathway cofactor biosynthesis; tetrahydrofolate biosynthesis; 2-amino-4-hydroxy-6-hydroxymethyl-7,8-dihydropteridine diphosphate from 7,8-dihydroneopterin triphosphate: step 3/4. Catalyzes the conversion of 7,8-dihydroneopterin into 6-hydroxymethyl-7,8-dihydropterin, a biosynthetic precursor of the vitamin tetrahydrofolate. Can use L-threo-dihydroneopterin and D-erythro-dihydroneopterin as substrates for the formation of 6-hydroxymethyldihydropterin, but it can also catalyze the epimerization of carbon 2' of dihydroneopterin and dihydromonapterin. The protein is Probable dihydroneopterin aldolase 3 of Arabidopsis thaliana (Mouse-ear cress).